The sequence spans 327 residues: uncharacterized protein (327 aa).

A signal peptide spans 1–24; the sequence is MKQPGFIRLATLALLSTLSFFSHG.

This is an uncharacterized protein from Salmonella typhimurium (strain LT2 / SGSC1412 / ATCC 700720).